The primary structure comprises 132 residues: Small ribosomal subunit protein uS8c (132 aa).

It belongs to the universal ribosomal protein uS8 family. In terms of assembly, part of the 30S ribosomal subunit.

It is found in the plastid. The protein localises to the chloroplast. In terms of biological role, one of the primary rRNA binding proteins, it binds directly to 16S rRNA central domain where it helps coordinate assembly of the platform of the 30S subunit. This chain is Small ribosomal subunit protein uS8c (rps8), found in Cycas taitungensis (Prince sago).